A 108-amino-acid polypeptide reads, in one-letter code: ATP-dependent Clp protease adapter protein ClpS (108 aa).

Belongs to the ClpS family. In terms of assembly, binds to the N-terminal domain of the chaperone ClpA.

Its function is as follows. Involved in the modulation of the specificity of the ClpAP-mediated ATP-dependent protein degradation. This Leptospira borgpetersenii serovar Hardjo-bovis (strain JB197) protein is ATP-dependent Clp protease adapter protein ClpS.